Reading from the N-terminus, the 697-residue chain is Elongation factor G 2 (697 aa).

Residues 5 to 280 form the tr-type G domain; that stretch reads SKYRNIGIFA…AVVDYLPDPV (276 aa). GTP contacts are provided by residues 14–21, 78–82, and 132–135; these read AHVDAGKT, DTPGH, and NKLD.

It belongs to the TRAFAC class translation factor GTPase superfamily. Classic translation factor GTPase family. EF-G/EF-2 subfamily.

Its subcellular location is the cytoplasm. Its function is as follows. Catalyzes the GTP-dependent ribosomal translocation step during translation elongation. During this step, the ribosome changes from the pre-translocational (PRE) to the post-translocational (POST) state as the newly formed A-site-bound peptidyl-tRNA and P-site-bound deacylated tRNA move to the P and E sites, respectively. Catalyzes the coordinated movement of the two tRNA molecules, the mRNA and conformational changes in the ribosome. The polypeptide is Elongation factor G 2 (Shewanella frigidimarina (strain NCIMB 400)).